The primary structure comprises 804 residues: Ribonucleoside-diphosphate reductase large subunit-like protein (804 aa).

This sequence belongs to the ribonucleoside diphosphate reductase large chain family.

It is found in the virion. Its subcellular location is the host cytoplasm. Functionally, does not possess a ribonucleotide reductase activity. Betaherpesviruses probably use another strategy to expand the dNTP pool in a quiescent host cell. In Homo sapiens (Human), this protein is Ribonucleoside-diphosphate reductase large subunit-like protein.